Here is a 551-residue protein sequence, read N- to C-terminus: Rhodopsin kinase grk7-a (551 aa).

Ser36 is subject to Phosphoserine. In terms of domain architecture, RGS spans 57 to 174 (YQSICVEQPI…QNSPFYDRFL (118 aa)). The 263-residue stretch at 189–451 (FYEFRILGKG…DDDPRKHAFF (263 aa)) folds into the Protein kinase domain. Residues 195 to 203 (LGKGGFGEV) and Lys218 contribute to the ATP site. Catalysis depends on Asp314, which acts as the Proton acceptor. One can recognise an AGC-kinase C-terminal domain in the interval 452–517 (KSINFQRLEA…GAIPISWQKE (66 aa)). Phosphoserine is present on Ser487. The tract at residues 529–551 (DPSREATGGGGNSGEKSGVCSIL) is disordered. Residues 542–551 (GEKSGVCSIL) show a composition bias toward low complexity. Cysteine methyl ester is present on Cys548. Residue Cys548 is the site of S-geranylgeranyl cysteine attachment. The propeptide at 549–551 (SIL) is removed in mature form.

This sequence belongs to the protein kinase superfamily. AGC Ser/Thr protein kinase family. GPRK subfamily. In terms of processing, autophosphorylated in vitro at Ser-487. Phosphorylation at Ser-36 is regulated by light and activated by cAMP.

The protein localises to the membrane. It carries out the reaction L-threonyl-[rhodopsin] + ATP = O-phospho-L-threonyl-[rhodopsin] + ADP + H(+). The catalysed reaction is L-seryl-[rhodopsin] + ATP = O-phospho-L-seryl-[rhodopsin] + ADP + H(+). Functionally, retina-specific kinase involved in the shutoff of the photoresponse and adaptation to changing light conditions via cone opsin phosphorylation, including rhodopsin (RHO). The polypeptide is Rhodopsin kinase grk7-a (grk7-a) (Xenopus laevis (African clawed frog)).